The chain runs to 335 residues: L-tyrosine isonitrile synthase (335 aa).

It belongs to the isocyanide synthase family.

It catalyses the reaction D-ribulose 5-phosphate + L-tyrosine = (2S)-3-(4-hydroxyphenyl)-2-isocyanopropanoate + hydroxyacetone + formaldehyde + phosphate + H2O + H(+). Involved in the biosynthesis of rhabduscin, a tyrosine derivative which is a potent inhibitor of phenoloxidase, a key component of the insect's innate immune system. Responsible for the synthesis of the isonitrile group on tyrosine using the C2 of ribulose 5-phosphate as the source of the carbon atom. This Xenorhabdus nematophila (strain ATCC 19061 / DSM 3370 / CCUG 14189 / LMG 1036 / NCIMB 9965 / AN6) protein is L-tyrosine isonitrile synthase.